The sequence spans 1311 residues: Zinc finger protein 521 (1311 aa).

Over residues 1 to 10 (MSRRKQAKPR) the composition is skewed to basic residues. The tract at residues 1 to 37 (MSRRKQAKPRSLKDPNCKLEDKTEDGEALDCKKRPED) is disordered. Residues 11–21 (SLKDPNCKLED) show a composition bias toward basic and acidic residues. The segment at 47–67 (HSCDSCLQVFESLSDITEHKI) adopts a C2H2-type 1; degenerate zinc-finger fold. Residues 81–108 (DPTCSWPASSPSSKDQTSPSHGEGCDFG) form a disordered region. Residues 87 to 102 (PASSPSSKDQTSPSHG) show a composition bias toward low complexity. 7 consecutive C2H2-type zinc fingers follow at residues 118–140 (YPCQ…EQSH), 146–168 (FKCT…IKLH), 174–196 (YHCS…LKTH), 202–224 (YKCA…MQVH), 246–269 (QKCS…AECH), 281–304 (LQCV…EQVH), and 310–332 (NSCS…MDSH). Low complexity predominate over residues 349 to 358 (VGYTSVSSTT). The segment at 349–397 (VGYTSVSSTTPDSNLSVDSSTMVEAAPPIPKSRGRKRAAQQTPDMTGPS) is disordered. Polar residues-rich tracts occupy residues 359–370 (PDSNLSVDSSTM) and 387–397 (AQQTPDMTGPS). The C2H2-type 9; degenerate zinc-finger motif lies at 405–429 (YSCIYCNKQLFSSLAVLQIHLKTMH). 3 consecutive C2H2-type zinc fingers follow at residues 437–460 (HICQ…KQVH), 477–500 (YQCN…RCSH), and 513–536 (FFCP…RQVH). Phosphoserine is present on Ser-546. The C2H2-type 13; atypical zinc-finger motif lies at 560–585 (YSCSYCTNSPIFNSVLKLNKHIKENH). Phosphoserine occurs at positions 605 and 608. 7 consecutive C2H2-type zinc fingers follow at residues 634–656 (YICN…LKTH), 664–686 (LTCP…VTIH), 694–717 (YICE…LDMH), 722–745 (FRCT…AVKH), 752–775 (YRCT…KHNH), 783–805 (HKCI…ITTH), and 809–832 (YNCK…REKH). The disordered stretch occupies residues 863-882 (TNSQESHNSHDGSEEDVDTS). Residues 886–908 (YGCDICGAAYTMETLLQNHQLRD) form a C2H2-type 21; degenerate zinc finger. 3 consecutive C2H2-type zinc fingers follow at residues 930–952 (YKCN…MQTH), 959–981 (YMCP…KVTH), and 1020–1042 (FRCV…GTFH). The C2H2-type 25; degenerate zinc-finger motif lies at 1065-1083 (YKCASCLKEFRSKQDLVKL). A C2H2-type 26 zinc finger spans residues 1138–1161 (TRCSSCNVKFESESELQNHIQTIH). Lys-1146 is covalently cross-linked (Glycyl lysine isopeptide (Lys-Gly) (interchain with G-Cter in SUMO2)). Positions 1168–1178 (SNSTQLKTPQV) are enriched in polar residues. The disordered stretch occupies residues 1168 to 1188 (SNSTQLKTPQVSPMPRISPSQ). 4 C2H2-type zinc fingers span residues 1195–1217 (YQCI…VANH), 1225–1247 (HECK…LIEH), 1256–1279 (FKCP…FSAH), and 1286–1309 (YDCT…MTQH).

The protein belongs to the krueppel C2H2-type zinc-finger protein family. Interacts with EBF1. Interacts with SMAD1 and SMAD4. Predominantly expressed in hematopoietic cells. Present in organs and tissues that contain stem and progenitor cells, myeloid and/or lymphoid: placenta, spleen, lymph nodes, thymus, bone marrow and fetal liver. Within the hematopoietic system, it is abundant in CD34(+) cells but undetectable in mature peripheral blood leukocytes, and its levels rapidly decrease during the differentiation of CD34(+) cells in response to hemopoietins.

It is found in the nucleus. Its function is as follows. Transcription factor that can both act as an activator or a repressor depending on the context. Involved in BMP signaling and in the regulation of the immature compartment of the hematopoietic system. Associates with SMADs in response to BMP2 leading to activate transcription of BMP target genes. Acts as a transcriptional repressor via its interaction with EBF1, a transcription factor involved specification of B-cell lineage; this interaction preventing EBF1 to bind DNA and activate target genes. This Homo sapiens (Human) protein is Zinc finger protein 521 (ZNF521).